Reading from the N-terminus, the 191-residue chain is Guanylate kinase (191 aa).

The Guanylate kinase-like domain maps to 4–182 (GRLIVVSGPS…AREEMIEIMR (179 aa)). Residue 11-18 (GPSGAGKS) coordinates ATP.

This sequence belongs to the guanylate kinase family.

The protein resides in the cytoplasm. It catalyses the reaction GMP + ATP = GDP + ADP. Essential for recycling GMP and indirectly, cGMP. The polypeptide is Guanylate kinase (Rubrobacter xylanophilus (strain DSM 9941 / JCM 11954 / NBRC 16129 / PRD-1)).